A 399-amino-acid chain; its full sequence is Proteinase-activated receptor 2 (399 aa).

The first 25 residues, 1 to 25 (MRSLSLAWLLGGITLLAASVSCSRT), serve as a signal peptide directing secretion. A propeptide spans 26–38 (ENLAPGRNNSKGR) (removed for receptor activation). A glycan (N-linked (GlcNAc...) asparagine) is linked at Asn33. The Extracellular segment spans residues 39-73 (SLIGRLETQPPITGKGVPVEPGFSIDEFSASILTG). A helical transmembrane segment spans residues 74–103 (KLTTVFLPVVYIIVFVIGLPSNGMALWIFL). The Cytoplasmic portion of the chain corresponds to 104–110 (FRTKKKH). A helical transmembrane segment spans residues 111–139 (PAVIYMANLALADLLSVIWFPLKISYHLH). Residues 140–151 (GNNWVYGEALCK) lie on the Extracellular side of the membrane. Cys150 and Cys228 are joined by a disulfide. A helical transmembrane segment spans residues 152-179 (VLIGFFYGNMYCSILFMTCLSVQRYWVI). The Cytoplasmic segment spans residues 180–185 (VNPMGH). Residues 186 to 213 (PRKKANIAVGVSLAIWLLIFLVTIPLYV) traverse the membrane as a helical segment. At 214-237 (MKQTIYIPALNITTCHDVLPEEVL) the chain is on the extracellular side. A glycan (N-linked (GlcNAc...) asparagine) is linked at Asn224. The chain crosses the membrane as a helical span at residues 238–271 (VGDMFNYFLSLAIGVFLFPALLTASAYVLMIKTL). The Cytoplasmic segment spans residues 272–279 (RSSAMDEH). The chain crosses the membrane as a helical span at residues 280-319 (SEKKRQRAIRLIITVLAMYFICFAPSNLLLVVHYFLIKTQ). Over 320-325 (RQSHVY) the chain is Extracellular. A helical membrane pass occupies residues 326–349 (ALYLVALCLSTLNSCIDPFVYYFV). Over 350 to 399 (SKDFRDHARNALLCRSVRTVNRMQISLSSNKFSRKSGSYSSSSTSVKTSY) the chain is Cytoplasmic. A lipid anchor (S-palmitoyl cysteine) is attached at Cys363.

It belongs to the G-protein coupled receptor 1 family. In terms of assembly, interacts with TLR4, COPS5 and TMED2. Interacts with GNAQ, GNA11, GNA12, GNA13 and GNA14. A proteolytic cleavage generates a new N-terminus that functions as a tethered ligand. Activating serine proteases include trypsin, mast cell tryptase, coagulation factors VII and Xa, myeloblastin/PRTN3 and membrane-type serine protease 1/ST14. Proposed subsequent cleavage by serine proteases is leading to receptor deactivation and include neutrophil elastase and cathepsin G. At least in part, implicated proteases are also shown to activate the receptor; the glycosylation status of the receptor is thought to contribute to the difference. Post-translationally, N-glycosylated and sialylated. In terms of processing, multiple phosphorylated on serine and threonine residues in the cytoplasmic region upon receptor activation; required for receptor desensitization and recruitment of beta-arrestin. Monoubiquitinated by Cbl at the plasma membrane and in early endosomes; not required for receptor endocytosis but for translocation to late endosomes or lysosomes. Deubiquitination involves Stambp and Usp8; required for lysosomal trafficking and receptor degradation.

It is found in the cell membrane. Its function is as follows. Receptor for trypsin and trypsin-like enzymes coupled to G proteins. Its function is mediated through the activation of several signaling pathways including phospholipase C (PLC), intracellular calcium, mitogen-activated protein kinase (MAPK), I-kappaB kinase/NF-kappaB and Rho. Can also be transactivated by cleaved F2r/Par1. Involved in modulation of inflammatory responses and regulation of innate and adaptive immunity, and acts as a sensor for proteolytic enzymes generated during infection. Generally is promoting inflammation. Can signal synergistically with Tlr4 and probably Tlr2 in inflammatory responses and modulates Tlr3 signaling. Has a protective role in establishing the endothelial barrier; the activity involves coagulation factor X. Regulates endothelial cell barrier integrity during neutrophil extravasation, probably following proteolytic cleavage by PRTN3. Proposed to have a bronchoprotective role in airway epithelium, but also shown to compromise the airway epithelial barrier by interrupting E-cadherin adhesion. Involved in the regulation of vascular tone; activation results in hypotension presumably mediated by vasodilation. Associates with a subset of G proteins alpha subunits such as GNAQ, GNA11, GNA14, GNA12 and GNA13, but probably not with G(o)-alpha, G(i) subunit alpha-1 and G(i) subunit alpha-2. Believed to be a class B receptor which internalizes as a complex with arrestin and traffic with it to endosomal vesicles, presumably as desensitized receptor, for extended periods of time. Mediates inhibition of TNF-alpha stimulated JNK phosphorylation via coupling to GNAQ and GNA11; the function involves dissociation of Ripk1 and Tradd from Tnfr1. Mediates phosphorylation of nuclear factor NF-kappa-B RELA subunit at 'Ser-536'; the function involves Ikbkb and is predominantly independent of G proteins. Involved in cellular migration. Involved in cytoskeletal rearrangement and chemotaxis through beta-arrestin-promoted scaffolds; the function is independent of GNAQ and GNA11 and involves promotion of cofilin dephosphorylation and actin filament severing. Induces redistribution of Cops5 from the plasma membrane to the cytosol and activation of the JNK cascade is mediated by Cops5. Involved in the recruitment of leukocytes to the sites of inflammation and is the major PAR receptor capable of modulating eosinophil function such as pro-inflammatory cytokine secretion, superoxide production and degranulation. During inflammation promotes dendritic cell maturation, trafficking to the lymph nodes and subsequent T-cell activation. Involved in antimicrobial response of innate immune cells; activation enhances phagocytosis of Gram-positive and killing of Gram-negative bacteria. Acts synergistically with interferon-gamma in enhancing antiviral responses. Mediates activation of pro-inflammatory and pro-fibrotic responses in fibroblasts, triggered by coagulation factor Xa (F10). Probably mediates activation of barrier protective signaling responses in endothelial cells, triggered by coagulation factor Xa (F10). The polypeptide is Proteinase-activated receptor 2 (F2rl1) (Mus musculus (Mouse)).